We begin with the raw amino-acid sequence, 113 residues long: UPF0342 protein SPy_0811/M5005_Spy0626 (113 aa).

Belongs to the UPF0342 family.

This is UPF0342 protein SPy_0811/M5005_Spy0626 from Streptococcus pyogenes serotype M1.